Here is a 118-residue protein sequence, read N- to C-terminus: Ribosome-binding factor A (118 aa).

Belongs to the RbfA family. In terms of assembly, monomer. Binds 30S ribosomal subunits, but not 50S ribosomal subunits or 70S ribosomes.

Its subcellular location is the cytoplasm. Functionally, one of several proteins that assist in the late maturation steps of the functional core of the 30S ribosomal subunit. Associates with free 30S ribosomal subunits (but not with 30S subunits that are part of 70S ribosomes or polysomes). Required for efficient processing of 16S rRNA. May interact with the 5'-terminal helix region of 16S rRNA. This chain is Ribosome-binding factor A, found in Bacillus cereus (strain AH187).